A 20-amino-acid polypeptide reads, in one-letter code: Dihydrolipoamide-residue succinyltransferase component of 2-oxoglutarate dehydrogenase complex (20 aa).

This sequence belongs to the 2-oxoacid dehydrogenase family. As to quaternary structure, forms a 24-polypeptide structural core with octahedral symmetry. The cofactor is (R)-lipoate.

It is found in the mitochondrion membrane. It carries out the reaction N(6)-[(R)-dihydrolipoyl]-L-lysyl-[protein] + succinyl-CoA = N(6)-[(R)-S(8)-succinyldihydrolipoyl]-L-lysyl-[protein] + CoA. The protein operates within amino-acid degradation; L-lysine degradation via saccharopine pathway; glutaryl-CoA from L-lysine: step 6/6. In terms of biological role, the 2-oxoglutarate dehydrogenase complex catalyzes the overall conversion of 2-oxoglutarate to succinyl-CoA and CO(2). It contains multiple copies of three enzymatic components: 2-oxoglutarate dehydrogenase (E1), dihydrolipoamide succinyltransferase (E2) and lipoamide dehydrogenase (E3). The protein is Dihydrolipoamide-residue succinyltransferase component of 2-oxoglutarate dehydrogenase complex of Solanum tuberosum (Potato).